A 715-amino-acid chain; its full sequence is MARNTAINRYRNIGICAHVDAGKTTTTERILFYTGLSHKMGEVHDGAATTDWMVQEQERGITITSAAITTFWEGSRRQYDKYRVNVIDTPGHVDFTIEVERSLRVLDGAVVVFCGTSGVEPQSETVWRQANKYGVPRIVYVNKMDRQGANFLRVVGQIKNRLGHTPVPIQIAIGAEENFEGQVDLIKMKAIYWNDDDKGTTYREEEIPAELVDLANEWRSNMVEAAAEASEELMNKYLEEGDLSAEDIKAGLRARTLASEIVPAVCGSSFKNKGVPLVLDAVIDFLPAPTEIPAIKGIHPDLADKPKEQMEESDYDERHADDNEPFSALAFKIATDPFVGTLTFVRVYSGVLESGQSVINSVKGKKERVGRMVQMHANQRDEIKEVRAGDIAALIGMKDVTTGETLCDPDKPIILERMDFPEPVISVAVEPKTKADQEKMGIALGKLAQEDPSFRVKTDEETGQTIISGMGELHLDILVDRMKREFNVEANIGKPQVSYRETITKDSVEIEGKFVRQSGGRGQFGHCWIRFSAPDVDDKGNITEGLVFTNEVVGGVVPKEYIPAIQKGIEEQMKNGVVAGYPLIGLKATVFDGSYHDVDSNEMAFKIAASMATKQLAQKGGGKVLEPIMKVEVVTPEDYMGDVMGDLNRRRGLIQGMEDSVSGKVIRAEVPLGEMFGYATDVRSMSQGRASYSMEFSKYAEAPSNIVEALVKKQG.

Residues 8 to 290 (NRYRNIGICA…AVIDFLPAPT (283 aa)) enclose the tr-type G domain. GTP is bound by residues 17 to 24 (AHVDAGKT), 88 to 92 (DTPGH), and 142 to 145 (NKMD).

Belongs to the TRAFAC class translation factor GTPase superfamily. Classic translation factor GTPase family. EF-G/EF-2 subfamily.

Its subcellular location is the cytoplasm. Catalyzes the GTP-dependent ribosomal translocation step during translation elongation. During this step, the ribosome changes from the pre-translocational (PRE) to the post-translocational (POST) state as the newly formed A-site-bound peptidyl-tRNA and P-site-bound deacylated tRNA move to the P and E sites, respectively. Catalyzes the coordinated movement of the two tRNA molecules, the mRNA and conformational changes in the ribosome. In Ectopseudomonas mendocina (strain ymp) (Pseudomonas mendocina), this protein is Elongation factor G.